Reading from the N-terminus, the 396-residue chain is 1-deoxy-D-xylulose 5-phosphate reductoisomerase (396 aa).

Residues Thr-15, Gly-16, Ser-17, Ile-18, Gly-41, and Asn-129 each contribute to the NADPH site. Residue Lys-130 coordinates 1-deoxy-D-xylulose 5-phosphate. Glu-131 provides a ligand contact to NADPH. Residue Asp-155 coordinates Mn(2+). Positions 156, 157, 182, and 205 each coordinate 1-deoxy-D-xylulose 5-phosphate. Mn(2+) is bound at residue Glu-157. Position 211 (Gly-211) interacts with NADPH. Ser-218, Asn-223, Lys-224, and Glu-227 together coordinate 1-deoxy-D-xylulose 5-phosphate. A Mn(2+)-binding site is contributed by Glu-227.

The protein belongs to the DXR family. Requires Mg(2+) as cofactor. Mn(2+) serves as cofactor.

It catalyses the reaction 2-C-methyl-D-erythritol 4-phosphate + NADP(+) = 1-deoxy-D-xylulose 5-phosphate + NADPH + H(+). It participates in isoprenoid biosynthesis; isopentenyl diphosphate biosynthesis via DXP pathway; isopentenyl diphosphate from 1-deoxy-D-xylulose 5-phosphate: step 1/6. Functionally, catalyzes the NADPH-dependent rearrangement and reduction of 1-deoxy-D-xylulose-5-phosphate (DXP) to 2-C-methyl-D-erythritol 4-phosphate (MEP). The protein is 1-deoxy-D-xylulose 5-phosphate reductoisomerase of Xanthomonas oryzae pv. oryzae (strain PXO99A).